The chain runs to 375 residues: MDEAEASLLRHFPLLLPQNREKTVYEGFISAQGSDFHLRIVLPKDLQLKKARLLCSLQLKNILNEYHQVVQQRMKHSPDLMSFMMELKMILEVALKNKQELCVQPPSCSFCKDLLTEIGAIGWDKLACVESSFSTIKLKADDASGRKHLITVKLKAKYPVEPPDCVVDFPVPFSVSWTPQSSLVDVYSQFLVALETLKVFWDVMDEIDEKTWVLEPEKPPRSATARRIALGKNVSIAIEVDPRHPTMLPEFCFLGADHVTKPLGMKLSGSIHLWDPENSLLQNLKDVLEIDFPARSILEESDFSMDCGICYARHLNGAIPDQVCNNPQCGQPFHEICLYEWLRGLSTSRQSFNVFFGDCPYCSKPITLKMSGRKP.

The UBC-RWD region (URD) stretch occupies residues 104-294 (QPPSCSFCKD…KDVLEIDFPA (191 aa)). The RING-type; degenerate zinc-finger motif lies at 307-363 (CGICYARHLNGAIPDQVCNNPQCGQPFHEICLYEWLRGLSTSRQSFNVFFGDCPYCS).

In terms of assembly, belongs to the multisubunit FA complex composed of FANCA, FANCB, FANCC, FANCE, FANCF, FANCG, FANCL/PHF9 and FANCM. In complex with FANCF, FANCA and FANCG, but not with FANCC, nor FANCE, interacts with HES1; this interaction may be essential for the stability and nuclear localization of FA core complex proteins. Interacts with FANCI. Interacts with GGN. Interacts (via the RING-type zinc finger) with UBE2T and UBE2W. Post-translationally, the RING-type zinc finger domain is monoubiquitinated in the presence of UBE2T and UBE2W.

Its subcellular location is the cytoplasm. It localises to the nucleus. It carries out the reaction S-ubiquitinyl-[E2 ubiquitin-conjugating enzyme]-L-cysteine + [acceptor protein]-L-lysine = [E2 ubiquitin-conjugating enzyme]-L-cysteine + N(6)-ubiquitinyl-[acceptor protein]-L-lysine.. It functions in the pathway protein modification; protein ubiquitination. Its function is as follows. Ubiquitin ligase protein that mediates monoubiquitination of FANCD2, a key step in the DNA damage pathway. Also mediates monoubiquitination of FANCI. May stimulate the ubiquitin release from UBE2W. May be required for proper primordial germ cell proliferation in the embryonic stage, whereas it is probably not needed for spermatogonial proliferation after birth. This Mus musculus (Mouse) protein is E3 ubiquitin-protein ligase FANCL (Fancl).